We begin with the raw amino-acid sequence, 225 residues long: UPF0173 metal-dependent hydrolase Pisl_0803 (225 aa).

It belongs to the UPF0173 family.

This Pyrobaculum islandicum (strain DSM 4184 / JCM 9189 / GEO3) protein is UPF0173 metal-dependent hydrolase Pisl_0803.